The following is a 298-amino-acid chain: Centromere protein O (298 aa).

Residues 29–49 (NISNRKSEEPAVRKKESSLRT) are disordered. Over residues 33 to 49 (RKSEEPAVRKKESSLRT) the composition is skewed to basic and acidic residues. A Phosphoserine modification is found at Ser35. The stretch at 39-74 (AVRKKESSLRTKIRELRQQRDKLRAEVKQWGARVKE) forms a coiled coil.

It belongs to the CENP-O/MCM21 family. As to quaternary structure, component of the CENPA-CAD complex, composed of CENPI, CENPK, CENPL, CENPO, CENPP, CENPQ, CENPR and CENPS. The CENPA-CAD complex interacts with the CENPA-NAC complex, at least composed of CENPA, CENPC, CENPH, CENPM, CENPN, CENPT and CENPU.

Its subcellular location is the nucleus. The protein localises to the chromosome. The protein resides in the centromere. It is found in the kinetochore. Its function is as follows. Component of the CENPA-CAD (nucleosome distal) complex, a complex recruited to centromeres which is involved in assembly of kinetochore proteins, mitotic progression and chromosome segregation. May be involved in incorporation of newly synthesized CENPA into centromeres via its interaction with the CENPA-NAC complex. Modulates the kinetochore-bound levels of NDC80 complex. In Mus musculus (Mouse), this protein is Centromere protein O (Cenpo).